We begin with the raw amino-acid sequence, 126 residues long: Protein ApaG (126 aa).

The 125-residue stretch at Ser2–His126 folds into the ApaG domain.

This is Protein ApaG from Pseudomonas putida (strain W619).